The chain runs to 318 residues: Aspartate carbamoyltransferase catalytic subunit (318 aa).

Positions 57 and 58 each coordinate carbamoyl phosphate. Lysine 85 is an L-aspartate binding site. 3 residues coordinate carbamoyl phosphate: arginine 107, histidine 141, and glutamine 144. Residues arginine 174 and arginine 228 each contribute to the L-aspartate site. Carbamoyl phosphate is bound by residues glycine 269 and proline 270.

Belongs to the aspartate/ornithine carbamoyltransferase superfamily. ATCase family. Heterododecamer (2C3:3R2) of six catalytic PyrB chains organized as two trimers (C3), and six regulatory PyrI chains organized as three dimers (R2).

It carries out the reaction carbamoyl phosphate + L-aspartate = N-carbamoyl-L-aspartate + phosphate + H(+). It participates in pyrimidine metabolism; UMP biosynthesis via de novo pathway; (S)-dihydroorotate from bicarbonate: step 2/3. Functionally, catalyzes the condensation of carbamoyl phosphate and aspartate to form carbamoyl aspartate and inorganic phosphate, the committed step in the de novo pyrimidine nucleotide biosynthesis pathway. In Mycolicibacterium smegmatis (strain ATCC 700084 / mc(2)155) (Mycobacterium smegmatis), this protein is Aspartate carbamoyltransferase catalytic subunit.